Consider the following 392-residue polypeptide: 8-amino-7-oxononanoate synthase (392 aa).

R21 contacts substrate. 114–115 serves as a coordination point for pyridoxal 5'-phosphate; the sequence is GY. Position 139 (H139) interacts with substrate. Pyridoxal 5'-phosphate contacts are provided by residues S187, 212 to 215, and 243 to 246; these read DEAH and TFGK. N6-(pyridoxal phosphate)lysine is present on K246. Residue T359 coordinates substrate.

The protein belongs to the class-II pyridoxal-phosphate-dependent aminotransferase family. BioF subfamily. As to quaternary structure, homodimer. The cofactor is pyridoxal 5'-phosphate.

It catalyses the reaction 6-carboxyhexanoyl-[ACP] + L-alanine + H(+) = (8S)-8-amino-7-oxononanoate + holo-[ACP] + CO2. It participates in cofactor biosynthesis; biotin biosynthesis. Catalyzes the decarboxylative condensation of pimeloyl-[acyl-carrier protein] and L-alanine to produce 8-amino-7-oxononanoate (AON), [acyl-carrier protein], and carbon dioxide. The sequence is that of 8-amino-7-oxononanoate synthase from Chlorobaculum parvum (strain DSM 263 / NCIMB 8327) (Chlorobium vibrioforme subsp. thiosulfatophilum).